The following is a 600-amino-acid chain: Chaperone protein DnaK (600 aa).

Threonine 175 is modified (phosphothreonine; by autocatalysis). A compositionally biased stretch (low complexity) spans 569–578 (SFAQATAQQA). Residues 569 to 600 (SFAQATAQQANTSESDPKADDSNTIDAEIKQD) form a disordered region. Residues 583 to 600 (SDPKADDSNTIDAEIKQD) are compositionally biased toward basic and acidic residues.

This sequence belongs to the heat shock protein 70 family.

Acts as a chaperone. This is Chaperone protein DnaK from Mesomycoplasma hyopneumoniae (strain 7448) (Mycoplasma hyopneumoniae).